The following is a 720-amino-acid chain: Engulfment and cell motility protein 3 (720 aa).

Residues 307–479 (EQREQLQVLR…VVREQLARTL (173 aa)) enclose the ELMO domain. The PH domain occupies 542 to 664 (RLCEGTLFRK…TDGLSALLGS (123 aa)). An SH3-binding motif is present at residues 696 to 706 (PERPPPVPPPP).

In terms of assembly, probably interacts directly with the SH3-domain of DOCK1 via its SH3-binding site. Part of a complex with DOCK1 and RAC1. Interacts with ADGRB3.

It localises to the cytoplasm. Its function is as follows. Involved in cytoskeletal rearrangements required for phagocytosis of apoptotic cells and cell motility. Acts in association with DOCK1 and CRK. Was initially proposed to be required in complex with DOCK1 to activate Rac Rho small GTPases. May enhance the guanine nucleotide exchange factor (GEF) activity of DOCK1. In Homo sapiens (Human), this protein is Engulfment and cell motility protein 3 (ELMO3).